Consider the following 295-residue polypeptide: Malonyl-[acyl-carrier protein] O-methyltransferase (295 aa).

Belongs to the methyltransferase superfamily.

The enzyme catalyses malonyl-[ACP] + S-adenosyl-L-methionine = malonyl-[ACP] methyl ester + S-adenosyl-L-homocysteine. The protein operates within cofactor biosynthesis; biotin biosynthesis. Its function is as follows. Converts the free carboxyl group of a malonyl-thioester to its methyl ester by transfer of a methyl group from S-adenosyl-L-methionine (SAM). It allows to synthesize pimeloyl-ACP via the fatty acid synthetic pathway. The sequence is that of Malonyl-[acyl-carrier protein] O-methyltransferase from Halorhodospira halophila (strain DSM 244 / SL1) (Ectothiorhodospira halophila (strain DSM 244 / SL1)).